The primary structure comprises 63 residues: uncharacterized protein (63 aa).

Residues 3-23 (IIYIILGFLSLAIGIIGIFPS) form a helical membrane-spanning segment.

Its subcellular location is the membrane. This is an uncharacterized protein from Haemophilus influenzae (strain ATCC 51907 / DSM 11121 / KW20 / Rd).